Consider the following 941-residue polypeptide: RNA-binding protein 4F (941 aa).

The span at 1–13 (MDADKQLERQLEK) shows a compositional bias: basic and acidic residues. Residues 1–149 (MDADKQLERQ…DSDNAGGGNQ (149 aa)) form a disordered region. Residues 14-32 (ELDEMPAEDLDDDAYDEYD) are compositionally biased toward acidic residues. The segment covering 42–52 (GSPQQGHSESP) has biased composition (polar residues). Ser-43 carries the phosphoserine modification. The span at 55 to 65 (EEEHKSEELRQ) shows a compositional bias: basic and acidic residues. The span at 87–98 (SSDDEPSVEETE) shows a compositional bias: acidic residues. A compositionally biased stretch (low complexity) spans 111-134 (DSSSSSDDVGVIEGSELESNSEVS). Ser-153 carries the phosphoserine modification. A disordered region spans residues 629-713 (RSRIKPNSQS…GPANAEAKES (85 aa)). Over residues 671-680 (EQQQQQQQQQ) the composition is skewed to low complexity. The residue at position 713 (Ser-713) is a Phosphoserine. Tyr-717 carries the post-translational modification Phosphotyrosine. Ser-718 is modified (phosphoserine). An RRM domain is found at 724–801 (NKIFVRNLHP…MNISVAISNP (78 aa)). Composition is skewed to basic and acidic residues over residues 862 to 902 (EANG…KGDD), 913 to 922 (QKGDEKKEEE), and 930 to 941 (SNDDFRKLFLKD). A disordered region spans residues 862-941 (EANGEEQKGD…DDFRKLFLKD (80 aa)).

The protein localises to the cytoplasm. Its function is as follows. May be involved in gene regulation during development. Binds RNA. This chain is RNA-binding protein 4F, found in Drosophila melanogaster (Fruit fly).